We begin with the raw amino-acid sequence, 361 residues long: Peptide chain release factor 1 (361 aa).

Q237 bears the N5-methylglutamine mark. Residues 287–306 (KRAAEEASTRKSLVGSGDRS) form a disordered region.

The protein belongs to the prokaryotic/mitochondrial release factor family. In terms of processing, methylated by PrmC. Methylation increases the termination efficiency of RF1.

The protein resides in the cytoplasm. Its function is as follows. Peptide chain release factor 1 directs the termination of translation in response to the peptide chain termination codons UAG and UAA. This Alteromonas mediterranea (strain DSM 17117 / CIP 110805 / LMG 28347 / Deep ecotype) protein is Peptide chain release factor 1.